The primary structure comprises 1078 residues: Zinc finger protein 827 (1078 aa).

Residues 1–10 (MPRRKQEQPK) are compositionally biased toward basic and acidic residues. The tract at residues 1-14 (MPRRKQEQPKRLPS) is mediates direct interaction with RBBP4. The segment at 1–76 (MPRRKQEQPK…PDTSLGSATP (76 aa)) is disordered. The RRK motif; mediates NuRD recruitment to telomeres motif lies at 3-5 (RRK). Composition is skewed to polar residues over residues 33 to 42 (YGNSSETPSE) and 62 to 76 (EQST…SATP). Glycyl lysine isopeptide (Lys-Gly) (interchain with G-Cter in SUMO2) cross-links involve residues Lys-175, Lys-215, and Lys-225. The disordered stretch occupies residues 307 to 341 (SLLPDDPLPLPSSEKKPEKVTPPPPPPPPTAQPPQ). The segment covering 326–338 (VTPPPPPPPPTAQ) has biased composition (pro residues). Glycyl lysine isopeptide (Lys-Gly) (interchain with G-Cter in SUMO2) cross-links involve residues Lys-357 and Lys-369. 3 consecutive C2H2-type zinc fingers follow at residues 371-393 (FQCP…MVIH), 399-421 (HQCP…MKVH), and 430-452 (FQCQ…MRCH). Glycyl lysine isopeptide (Lys-Gly) (interchain with G-Cter in SUMO2) cross-links involve residues Lys-463, Lys-472, Lys-520, Lys-546, Lys-577, Lys-584, and Lys-594. Residues 466–490 (IPDPDVKGSPHLSDSGCLGQQREGG) are disordered. The interval 594–640 (KEEPKEEESLSMPLPRSSYVFSPEPEVSTPSVSEDPLTPQEGKGSVL) is disordered. Low complexity predominate over residues 613 to 627 (VFSPEPEVSTPSVSE). Residues Lys-636 and Lys-655 each participate in a glycyl lysine isopeptide (Lys-Gly) (interchain with G-Cter in SUMO2) cross-link. Residue Lys-670 forms a Glycyl lysine isopeptide (Lys-Gly) (interchain with G-Cter in SUMO1); alternate linkage. Residue Lys-670 forms a Glycyl lysine isopeptide (Lys-Gly) (interchain with G-Cter in SUMO2); alternate linkage. Residues Lys-701, Lys-707, Lys-739, Lys-775, and Lys-795 each participate in a glycyl lysine isopeptide (Lys-Gly) (interchain with G-Cter in SUMO2) cross-link. 2 consecutive C2H2-type zinc fingers follow at residues 814-836 (FPCD…LSLH) and 842-864 (YKCH…LTVH). Residues Lys-867 and Lys-888 each participate in a glycyl lysine isopeptide (Lys-Gly) (interchain with G-Cter in SUMO2) cross-link. C2H2-type zinc fingers lie at residues 894-916 (YSCH…MSLH) and 926-949 (ICCT…GTKH). Over residues 945–957 (IGTKHTGDDRKTP) the composition is skewed to basic and acidic residues. Residues 945 to 990 (IGTKHTGDDRKTPSESNSPSSSSLSTLSDSANGKDDSDSSQKNKGG) form a disordered region. Lys-955 participates in a covalent cross-link: Glycyl lysine isopeptide (Lys-Gly) (interchain with G-Cter in SUMO2). The span at 958-974 (SESNSPSSSSLSTLSDS) shows a compositional bias: low complexity. The span at 976–985 (NGKDDSDSSQ) shows a compositional bias: basic and acidic residues. Lys-1011 is covalently cross-linked (Glycyl lysine isopeptide (Lys-Gly) (interchain with G-Cter in SUMO2)). 2 C2H2-type zinc fingers span residues 1016-1038 (FECV…LQIH) and 1044-1066 (FECD…KKCH).

This sequence belongs to the krueppel C2H2-type zinc-finger protein family. In terms of assembly, part of a transcription inhibitory ribonucleoprotein complex composed at least of the circular RNA circZNF827, HNRNPK and HNRNPL. Interacts with the nucleosome remodeling and histone deacetylase/NuRD complex. Interacts with RBBP4; the interaction is direct and recruits RBBP4, a component of the NuRD complex, to telomeres.

Its subcellular location is the nucleus. It localises to the chromosome. The protein localises to the telomere. Functionally, as part of a ribonucleoprotein complex composed at least of HNRNPK, HNRNPL and the circular RNA circZNF827 that nucleates the complex on chromatin, may negatively regulate the transcription of genes involved in neuronal differentiation. Could also recruit the nucleosome remodeling and histone deacetylase/NuRD complex to telomeric regions of chromosomes to regulate chromatin remodeling as part of telomere maintenance. The sequence is that of Zinc finger protein 827 (Znf827) from Mus musculus (Mouse).